The sequence spans 365 residues: Potassium channel subfamily K member 9 (365 aa).

Topologically, residues 1–8 are cytoplasmic; the sequence is MKKQNVRT. Residues 9–29 form a helical membrane-spanning segment; that stretch reads LSLIACTFTYLLVGAAVFDAL. At 30–88 the chain is on the extracellular side; the sequence is ESDHEMREEEKLKAEEIRIRGKYNISTEDYRQLELVILQSEPHRAGVQWKFAGSFYFAI. The N-linked (GlcNAc...) asparagine glycan is linked to N53. The pore-forming intramembrane region spans 89-101; sequence TVITTIGYGHAAP. The K(+) site is built by T93, I94, G95, and Y96. The selectivity filter 1 stretch occupies residues 93–98; it reads TIGYGH. The Extracellular segment spans residues 102-107; sequence GTDAGK. The helical transmembrane segment at 108–128 threads the bilayer; sequence AFCMFYAVLGIPLTLVMFQSL. At 129–158 the chain is on the cytoplasmic side; the sequence is GERMNTFVRYLLKRIKKCCGMRNTEVSMEN. The helical transmembrane segment at 159–179 threads the bilayer; sequence MVTVGFFSCMGTLCIGAAAFS. Residues 180–194 are Extracellular-facing; sequence QCEEWSFFHAYYYCF. An intramembrane region (pore-forming) is located at residues 195–207; that stretch reads ITLTTIGFGDYVA. K(+)-binding residues include T199, I200, G201, and F202. A selectivity filter 2 region spans residues 199 to 204; the sequence is TIGFGD. The Extracellular segment spans residues 208 to 218; it reads LQSKGALQRKP. A helical membrane pass occupies residues 219–239; that stretch reads FYVAFSFMYILVGLTVIGAFL. Residues 240 to 365 lie on the Cytoplasmic side of the membrane; that stretch reads NLVVLRFLTM…HRLMLRRKSV (126 aa). An X-gate region spans residues 243–248; that stretch reads VLRFLT.

This sequence belongs to the two pore domain potassium channel (TC 1.A.1.8) family. In terms of assembly, homodimer. Heterodimer with KCNK1. Heterodimer with KCNK3. In terms of tissue distribution, highly expressed in the brain.

The protein resides in the cell membrane. Its subcellular location is the mitochondrion inner membrane. It localises to the cell projection. It is found in the dendrite. The catalysed reaction is K(+)(in) = K(+)(out). The enzyme catalyses Na(+)(in) = Na(+)(out). Inhibited by extracellular acidification. Functionally, k(+) channel that conducts voltage-dependent outward rectifying currents upon membrane depolarization. Voltage sensing is coupled to K(+) electrochemical gradient in an 'ion flux gating' mode where outward but not inward ion flow opens the gate. Changes ion selectivity and becomes permeable to Na(+) ions in response to extracellular acidification. Protonation of the pH sensor His-98 stabilizes C-type inactivation conformation likely converting the channel from outward K(+)-conducting, to inward Na(+)-conducting to nonconductive state. Homo- and heterodimerizes to form functional channels with distinct regulatory and gating properties. Allows K(+) currents with fast-gating kinetics important for the repolarization and hyperpolarization phases of action potentials. In granule neurons, hyperpolarizes the resting membrane potential to limit intrinsic neuronal excitability, but once the action potential threshold is reached, supports high-frequency action potential firing and increased neuronal excitability. Homomeric and/or heteromeric KCNK3:KCNK9 channels operate in cerebellar granule cells, whereas heteromeric KCNK1:KCNK9 enables currents in hippocampal dentate gyrus granule neurons. Dispensable for central chemosensory respiration i.e. breathing controlled by brainstem CO2/pH, it rather conducts pH-sensitive currents and controls the firing rate of serotonergic raphe neurons involved in potentiation of the respiratory chemoreflex. In retinal ganglion cells, mediates outward rectifying currents that regulate action potentials in response to acidification of the synaptic cleft. Involved in transmission of image-forming and nonimage-forming visual information in the retina. In adrenal gland, contributes to the maintenance of a hyperpolarized resting membrane potential of aldosterone-producing cells at zona glomerulosa and limits aldosterone release as part of a regulatory mechanism that controls arterial blood pressure and electrolyte homeostasis. The polypeptide is Potassium channel subfamily K member 9 (KCNK9) (Cavia porcellus (Guinea pig)).